We begin with the raw amino-acid sequence, 278 residues long: Rhomboid protease GlpG (278 aa).

A run of 6 helical transmembrane segments spans residues 94–114 (AGPLTLSVMVLCIAIYILMLI), 143–163 (AFLHFSLLHILFNLMWWWYLG), 175–195 (LLVLTIVSAVFSGWGQSLFSG), 196–216 (ANFGGLSGVVYALMGYVWLTG), 224–241 (ISLPRGLMAFSVLWLIAG), and 245–267 (ILGLSIANAAHVSGLIIGLLMAF). S202 (nucleophile) is an active-site residue. H255 is an active-site residue.

The protein belongs to the peptidase S54 family.

The protein resides in the cell inner membrane. The enzyme catalyses Cleaves type-1 transmembrane domains using a catalytic dyad composed of serine and histidine that are contributed by different transmembrane domains.. Functionally, rhomboid-type serine protease that catalyzes intramembrane proteolysis. The sequence is that of Rhomboid protease GlpG from Yersinia pseudotuberculosis serotype I (strain IP32953).